The following is a 464-amino-acid chain: Mitogen-activated protein kinase 10 (464 aa).

The region spanning 64–359 (YQNLKPIGSG…VDDALQHPYI (296 aa)) is the Protein kinase domain. ATP is bound by residues 70–78 (IGSGAQGIV) and Lys-93. Residue Asp-189 is the Proton acceptor of the active site. Thr-221 bears the Phosphothreonine; by MAP2K7 mark. Positions 221 to 223 (TPY) match the TXY motif. The residue at position 223 (Tyr-223) is a Phosphotyrosine; by MAP2K4. A disordered region spans residues 405 to 464 (TKNGVVKSQPSPSGAAVNSSESLPPSSAVNDISSMSTDQTLASDTDSSLEASAGPLGCCR). The segment covering 410–454 (VKSQPSPSGAAVNSSESLPPSSAVNDISSMSTDQTLASDTDSSLE) has biased composition (polar residues). Residues Cys-462 and Cys-463 are each lipidated (S-palmitoyl cysteine).

The protein belongs to the protein kinase superfamily. CMGC Ser/Thr protein kinase family. MAP kinase subfamily. In terms of assembly, interacts with MAPK8IP1/JIP-1, MAPK8IP3/JIP-3/JSAP1 and SPAG9/MAPK8IP4/JIP4. Interacts with HDAC9 and MAPKBP1. Interacts with ARRB2; the interaction enhances MAPK10 activation by MAP3K5. Interacts with SARM1. Interacts with JUND; interaction is inhibited in the presence of MEN1. Mg(2+) is required as a cofactor. Dually phosphorylated on Thr-221 and Tyr-223 by MAP2K4 and MAP2K7, which activates the enzyme. MAP2K7 shows a strong preference for Thr-221 while MAP2K4 phosphorylates Tyr-223 preferentially. Weakly autophosphorylated on threonine and tyrosine residues in vitro. In terms of processing, palmitoylation regulates subcellular location and axonal development. In terms of tissue distribution, brain (at protein level). Expressed specifically in neurons of the hippocampus, cortex, cerebellum, brainstem, and spinal cord. Seems to be also found in testis, and very weakly in the heart.

Its subcellular location is the cytoplasm. The protein localises to the membrane. The protein resides in the nucleus. It localises to the mitochondrion. The enzyme catalyses L-seryl-[protein] + ATP = O-phospho-L-seryl-[protein] + ADP + H(+). It catalyses the reaction L-threonyl-[protein] + ATP = O-phospho-L-threonyl-[protein] + ADP + H(+). Activated by threonine and tyrosine phosphorylation by two dual specificity kinases, MAP2K4 and MAP2K7. MAP2K7 phosphorylates MAPK10 on Thr-221 causing a conformational change and a large increase in Vmax for the enzyme. MAP2K4 then phosphorylates Tyr-223 resulting in a further increase in Vmax. Inhibited by dual specificity phosphatases, such as DUSP1. Inhibited by HDAC9. Its function is as follows. Serine/threonine-protein kinase involved in various processes such as neuronal proliferation, differentiation, migration and programmed cell death. Extracellular stimuli such as pro-inflammatory cytokines or physical stress stimulate the stress-activated protein kinase/c-Jun N-terminal kinase (SAP/JNK) signaling pathway. In this cascade, two dual specificity kinases MAP2K4/MKK4 and MAP2K7/MKK7 phosphorylate and activate MAPK10/JNK3. In turn, MAPK10/JNK3 phosphorylates a number of transcription factors, primarily components of AP-1 such as JUN and ATF2 and thus regulates AP-1 transcriptional activity. Plays regulatory roles in the signaling pathways during neuronal apoptosis. Phosphorylates the neuronal microtubule regulator STMN2. Acts in the regulation of the amyloid-beta precursor protein/APP signaling during neuronal differentiation by phosphorylating APP. Also participates in neurite growth in spiral ganglion neurons. Phosphorylates the CLOCK-BMAL1 heterodimer and plays a role in the photic regulation of the circadian clock. Phosphorylates JUND and this phosphorylation is inhibited in the presence of MEN1. This Mus musculus (Mouse) protein is Mitogen-activated protein kinase 10 (Mapk10).